The primary structure comprises 331 residues: Mitochondrial glycine transporter (331 aa).

3 Solcar repeats span residues 19-103, 132-216, and 234-318; these read SRTT…LRQG, LSNW…LKRR, and SSSS…LILR. The next 6 helical transmembrane spans lie at 25-50, 78-104, 138-163, 191-214, 238-264, and 293-311; these read FAAG…TRVQ, GTLP…RQGL, LATG…VRYE, GFGA…EQLK, INFV…KTRL, and GLGL…AWTV.

Belongs to the mitochondrial carrier (TC 2.A.29) family. SLC25A38 subfamily.

Its subcellular location is the mitochondrion inner membrane. It carries out the reaction glycine(in) = glycine(out). In terms of biological role, mitochondrial glycine transporter that imports glycine into the mitochondrial matrix. Plays an important role in providing glycine for the first enzymatic step in heme biosynthesis, the condensation of glycine with succinyl-CoA to produce 5-aminolevulinate (ALA) in the mitochondrial matrix. This chain is Mitochondrial glycine transporter, found in Neosartorya fischeri (strain ATCC 1020 / DSM 3700 / CBS 544.65 / FGSC A1164 / JCM 1740 / NRRL 181 / WB 181) (Aspergillus fischerianus).